Here is a 206-residue protein sequence, read N- to C-terminus: uncharacterized protein (206 aa).

Residues 128–206 are disordered; the sequence is KRYNVQKPKV…DQSWLDELLR (79 aa). Residues 171–181 are compositionally biased toward polar residues; the sequence is YISSNHSSMHI.

Its subcellular location is the cytoplasm. It localises to the nucleus. This is an uncharacterized protein from Schizosaccharomyces pombe (strain 972 / ATCC 24843) (Fission yeast).